The chain runs to 269 residues: Tetrahydromethanopterin S-methyltransferase subunit C (269 aa).

The next 8 helical transmembrane spans lie at 18 to 38 (VLVI…FVPS), 39 to 59 (LAML…ANTT), 62 to 82 (VAAY…LGMG), 84 to 104 (ISAL…ALPF), 106 to 126 (LVLA…FIVG), 152 to 172 (ALAI…DLII), 180 to 200 (IIAL…NACI), and 222 to 242 (LVFS…VFWI).

The protein belongs to the MtrC family. As to quaternary structure, the complex is composed of 8 subunits; MtrA, MtrB, MtrC, MtrD, MtrE, MtrF, MtrG and MtrH.

Its subcellular location is the cell membrane. The catalysed reaction is 5-methyl-5,6,7,8-tetrahydromethanopterin + coenzyme M + 2 Na(+)(in) = 5,6,7,8-tetrahydromethanopterin + methyl-coenzyme M + 2 Na(+)(out). Its pathway is one-carbon metabolism; methanogenesis from CO(2); methyl-coenzyme M from 5,10-methylene-5,6,7,8-tetrahydromethanopterin: step 2/2. Its function is as follows. Part of a complex that catalyzes the formation of methyl-coenzyme M and tetrahydromethanopterin from coenzyme M and methyl-tetrahydromethanopterin. This is an energy-conserving, sodium-ion translocating step. This chain is Tetrahydromethanopterin S-methyltransferase subunit C, found in Methanococcus vannielii (strain ATCC 35089 / DSM 1224 / JCM 13029 / OCM 148 / SB).